Reading from the N-terminus, the 334-residue chain is MGWFFQKKKEFDFGGELDRLEMKLEEAQYNIDNIQSQKKKILFRYTVCSLAIYTIGMAVWASRSSILFQHPLFSKLFRISLYILGVFSLYMFRWAIAWFCEKRLSRARMNLHKLNAEKRKILDALKSRKEYFETQALLEKYGEQPTLAQKKLSNAAAAKSVPGSSSSSSDPMHPQHWYDRVLEGLVGANENSENNREALICSHCFHHNGLASYGEKASDVRYVCLFCKAWNGPPIDKSLPSSEMDSNLQTNPSSISKGKKNNSNNTTQKGPNIISSPQVINASSPVRKAGKKKSKKALPTSPLSSSSPDASYNSVSDSFHTVAASVPESLTPTK.

At 1 to 40 the chain is on the cytoplasmic side; the sequence is MGWFFQKKKEFDFGGELDRLEMKLEEAQYNIDNIQSQKKK. The stretch at 12 to 42 forms a coiled coil; that stretch reads DFGGELDRLEMKLEEAQYNIDNIQSQKKKIL. Residues 41–61 form a helical membrane-spanning segment; sequence ILFRYTVCSLAIYTIGMAVWA. The Lumenal segment spans residues 62 to 78; the sequence is SRSSILFQHPLFSKLFR. Residues 79–99 form a helical membrane-spanning segment; it reads ISLYILGVFSLYMFRWAIAWF. Residues 99 to 127 are a coiled coil; the sequence is FCEKRLSRARMNLHKLNAEKRKILDALKS. Residues 100-334 are Cytoplasmic-facing; the sequence is CEKRLSRARM…SVPESLTPTK (235 aa). Residues 201–227 form a C4-type; plays a role in ER morphology zinc finger; sequence CSHCFHHNGLASYGEKASDVRYVCLFC. A disordered region spans residues 237 to 315; that stretch reads KSLPSSEMDS…SSPDASYNSV (79 aa). Polar residues predominate over residues 239–252; it reads LPSSEMDSNLQTNP. A compositionally biased stretch (low complexity) spans 253-270; sequence SSISKGKKNNSNNTTQKG. Polar residues predominate over residues 273 to 283; the sequence is IISSPQVINAS. S284 is subject to Phosphoserine. Over residues 297–315 the composition is skewed to low complexity; that stretch reads ALPTSPLSSSSPDASYNSV.

Belongs to the lunapark family.

The protein localises to the endoplasmic reticulum membrane. It localises to the golgi apparatus membrane. In terms of biological role, plays a role in tubular endoplasmic reticulum network formation and maintenance. In Schizosaccharomyces pombe (strain 972 / ATCC 24843) (Fission yeast), this protein is Endoplasmic reticulum junction formation protein lunapark (lnp1).